The sequence spans 96 residues: Co-chaperonin GroES (96 aa).

This sequence belongs to the GroES chaperonin family. Heptamer of 7 subunits arranged in a ring. Interacts with the chaperonin GroEL.

It is found in the cytoplasm. Functionally, together with the chaperonin GroEL, plays an essential role in assisting protein folding. The GroEL-GroES system forms a nano-cage that allows encapsulation of the non-native substrate proteins and provides a physical environment optimized to promote and accelerate protein folding. GroES binds to the apical surface of the GroEL ring, thereby capping the opening of the GroEL channel. This is Co-chaperonin GroES from Myxococcus xanthus (strain DK1622).